The chain runs to 1051 residues: Transcription intermediary factor 1-alpha (1051 aa).

The tract at residues 1–42 (MEVAVEKAAAAAAPAGGPAAAAPSGENEAESRQGPDSESGGE) is disordered. Lysine 7 participates in a covalent cross-link: Glycyl lysine isopeptide (Lys-Gly) (interchain with G-Cter in SUMO2). Residues 8 to 23 (AAAAAAPAGGPAAAAP) show a composition bias toward low complexity. The RING-type zinc-finger motif lies at 52 to 77 (CAVCHQNIQSRVPKLLPCLHSFCQRC). The interval 94–115 (SAETPPPAPAPAPAPGSPAGGP) is disordered. Threonine 97 is subject to Phosphothreonine. Positions 97-109 (TPPPAPAPAPAPG) are enriched in pro residues. Phosphoserine is present on serine 110. B box-type zinc fingers lie at residues 158–211 (KSNQ…VSPE) and 218–259 (QRPV…YQFI). Zn(2+) contacts are provided by cysteine 163, cysteine 166, cysteine 187, and histidine 200. Lysine 205 participates in a covalent cross-link: Glycyl lysine isopeptide (Lys-Gly) (interchain with G-Cter in SUMO2). The Zn(2+) site is built by cysteine 223, histidine 226, cysteine 246, and histidine 251. Lysine 276 participates in a covalent cross-link: Glycyl lysine isopeptide (Lys-Gly) (interchain with G-Cter in SUMO2). Positions 289-359 (NQIQNRIIEI…AGLSKQLEHV (71 aa)) form a coiled coil. The disordered stretch occupies residues 429–457 (ESQPQMPKQNPVVEQSSQPPGGLPSNQLS). Residues 431 to 457 (QPQMPKQNPVVEQSSQPPGGLPSNQLS) show a composition bias toward polar residues. Residues lysine 436 and lysine 458 each participate in a glycyl lysine isopeptide (Lys-Gly) (interchain with G-Cter in SUMO2) cross-link. An Omega-N-methylarginine modification is found at arginine 469. Low complexity-rich tracts occupy residues 479–490 (AQRQQVQRRPAP) and 501–510 (PIQQPSISHQ). Residues 479 to 551 (AQRQQVQRRP…PSQNVPRQTT (73 aa)) are disordered. Residues 526–535 (PNGPVLPPYP) show a composition bias toward pro residues. Residues 538-551 (LRYSPSQNVPRQTT) are compositionally biased toward polar residues. Residues lysine 553 and lysine 642 each participate in a glycyl lysine isopeptide (Lys-Gly) (interchain with G-Cter in SUMO2) cross-link. The segment at 644–713 (TGVDHAQPRP…PAGADSTHKV (70 aa)) is disordered. Phosphoserine is present on residues serine 655, serine 661, and serine 668. Polar residues predominate over residues 655–667 (SNRTVQSPNSSVP). Residues 686-708 (SPSASSVGSRGSSGSSSKPAGAD) are compositionally biased toward low complexity. Glycyl lysine isopeptide (Lys-Gly) (interchain with G-Cter in SUMO2) cross-links involve residues lysine 703 and lysine 712. Glycyl lysine isopeptide (Lys-Gly) (interchain with G-Cter in SUMO); alternate cross-links involve residues lysine 724 and lysine 742. A Glycyl lysine isopeptide (Lys-Gly) (interchain with G-Cter in SUMO1); alternate cross-link involves residue lysine 724. Glycyl lysine isopeptide (Lys-Gly) (interchain with G-Cter in SUMO2); alternate cross-links involve residues lysine 724 and lysine 742. Phosphoserine is present on residues serine 745 and serine 769. The interval 755–780 (NYPRSILTSLLLNSSQSSASEETVLR) is nuclear receptor binding site (NRBS). The tract at residues 771 to 827 (SSASEETVLRSDAPDSTGDQPGLHQENSSNGKSEWSDASQKSPVHVGETRKEDDPNE) is disordered. Over residues 795 to 812 (QENSSNGKSEWSDASQKS) the composition is skewed to polar residues. Lysine 802 is covalently cross-linked (Glycyl lysine isopeptide (Lys-Gly) (interchain with G-Cter in SUMO2)). The residue at position 809 (serine 809) is a Phosphoserine. Residue lysine 811 forms a Glycyl lysine isopeptide (Lys-Gly) (interchain with G-Cter in SUMO2) linkage. Serine 812 bears the Phosphoserine mark. Threonine 819 bears the Phosphothreonine mark. The PHD-type zinc-finger motif lies at 827-874 (EDWCAVCQNGGELLCCEKCPKVFHLTCHVPTLTNFPSGEWICTFCRDL). Positions 835-841 (NGGELLC) are interaction with histone H3 that is not methylated at 'Lys-4' (H3K4me0). A Glycyl lysine isopeptide (Lys-Gly) (interchain with G-Cter in SUMO2) cross-link involves residue lysine 876. The Nuclear localization signal signature appears at 892–908 (KRKSEGLTKLTPIDKRK). The 106-residue stretch at 900–1005 (KLTPIDKRKC…SYFEELLKNL (106 aa)) folds into the Bromo domain. Residues lysine 950 and lysine 993 each participate in a glycyl lysine isopeptide (Lys-Gly) (interchain with G-Cter in SUMO2) cross-link. The disordered stretch occupies residues 1024-1051 (KFSDDSDDDFVQPRKKRLKSTEDRQLLK). Residues serine 1026 and serine 1029 each carry the phosphoserine modification. Lysine 1042 is covalently cross-linked (Glycyl lysine isopeptide (Lys-Gly) (interchain with G-Cter in SUMO2)). The span at 1042-1051 (KSTEDRQLLK) shows a compositional bias: basic and acidic residues. Serine 1043 is modified (phosphoserine).

Interacts (via bromo domain) with histone H3 (via N-terminus), provided that it is not methylated at 'Lys-4' (H3K4me0). Does not interact with histone H3 that is methylated at 'Lys-4' (H3K4me1, H3K4me2 or H3K4me3). Interacts (via bromo domain) with histone H3 (via N-terminus) that is acetylated at 'Lys-23' (H3K23ac). Has the highest affinity for histone H3 that is both unmodified at 'Lys-4' (H3K4me0) and acetylated at 'Lys-23' (H3K23ac). Has very low affinity for histone H3 that is methylated at 'Lys-9' (H3K9me), or acetylated at both 'Lys-9' (H3K9ac) and 'Lys-14' (H3K14ac), or acetylated at 'Lys-27' (H3K27ac) (in vitro). Interacts with TRIM16. Interacts with NR3C2/MCR. Interacts with the ligand-binding domain of estrogen receptors (in vitro). Interaction with DNA-bound estrogen receptors requires the presence of estradiol. Interacts with AR, CARM1, KAT5/TIP60, NCOA2/GRIP1, BRD7, CBX1, CBX3 and CBX5. Part of a coactivator complex containing TRIM24, NCOA2/GRIP1 and CARM1. Interacts with p53/TP53 and PML. Post-translationally, sumoylated. Phosphorylated at Ser-768 by ATM kinase induces ubiquitination and degradation during DNA damage. In terms of processing, undergoes ubiquitination-mediated degradation in response to DNA damage. Detected in embryonic and adult liver. Detected in zygote and throughout embryogenesis (at protein level). Detected in all adult tissues, with the highest expression level in testis.

Its subcellular location is the nucleus. It localises to the cytoplasm. The catalysed reaction is S-ubiquitinyl-[E2 ubiquitin-conjugating enzyme]-L-cysteine + [acceptor protein]-L-lysine = [E2 ubiquitin-conjugating enzyme]-L-cysteine + N(6)-ubiquitinyl-[acceptor protein]-L-lysine.. It participates in protein modification; protein ubiquitination. Functionally, transcriptional coactivator that interacts with numerous nuclear receptors and coactivators and modulates the transcription of target genes. Interacts with chromatin depending on histone H3 modifications, having the highest affinity for histone H3 that is both unmodified at 'Lys-4' (H3K4me0) and acetylated at 'Lys-23' (H3K23ac). Has E3 protein-ubiquitin ligase activity. Promotes ubiquitination and proteasomal degradation of p53/TP53. Plays a role in the regulation of cell proliferation and apoptosis via its effects on p53/TP53 levels. Up-regulates ligand-dependent transcription activation by AR, GCR/NR3C1, thyroid hormone receptor (TR) and ESR1. Modulates transcription activation by retinoic acid (RA) receptors, such as RARA. Plays a role in regulating retinoic acid-dependent proliferation of hepatocytes. Required for normal transition from proliferating neonatal hepatocytes to quiescent adult hepatocytes. Transcriptional coactivator that interacts with numerous nuclear receptors and coactivators and modulates the transcription of target genes. Interacts with chromatin depending on histone H3 modifications, having the highest affinity for histone H3 that is both unmodified at 'Lys-4' (H3K4me0) and acetylated at 'Lys-23' (H3K23ac). Has E3 protein-ubiquitin ligase activity. During the DNA damage response, participates in an autoregulatory feedback loop with TP53. Early in response to DNA damage, ATM kinase phosphorylates TRIM24 leading to its ubiquitination and degradation. After sufficient DNA repair has occurred, TP53 activates TRIM24 transcription, ultimately leading to TRIM24-mediated TP53 ubiquitination and degradation. Plays a role in the regulation of cell proliferation and apoptosis, at least in part via its effects on p53/TP53 levels. Up-regulates ligand-dependent transcription activation by AR, GCR/NR3C1, thyroid hormone receptor (TR) and ESR1. Modulates transcription activation by retinoic acid (RA) receptors, including RARA. Plays a role in regulating retinoic acid-dependent proliferation of hepatocytes. Also participates in innate immunity by mediating the specific 'Lys-63'-linked ubiquitination of TRAF3 leading to activation of downstream signal transduction of the type I IFN pathway. Additionally, negatively regulates NLRP3/CASP1/IL-1beta-mediated pyroptosis and cell migration probably by ubiquitinating NLRP3. The chain is Transcription intermediary factor 1-alpha (Trim24) from Mus musculus (Mouse).